The primary structure comprises 554 residues: Arginine--tRNA ligase (554 aa).

The short motif at 130 to 140 (ANPTGDLHIGH) is the 'HIGH' region element.

It belongs to the class-I aminoacyl-tRNA synthetase family. As to quaternary structure, monomer.

It is found in the cytoplasm. It carries out the reaction tRNA(Arg) + L-arginine + ATP = L-arginyl-tRNA(Arg) + AMP + diphosphate. The chain is Arginine--tRNA ligase from Staphylococcus carnosus (strain TM300).